A 33-amino-acid chain; its full sequence is Neutrophil defensin 1 (33 aa).

3 disulfides stabilise this stretch: Cys-3/Cys-31, Cys-5/Cys-20, and Cys-10/Cys-30.

It belongs to the alpha-defensin family.

It is found in the secreted. Anti-fungal and bactericidal activity, greater against Gram-positive bacteria. This is Neutrophil defensin 1 from Mesocricetus auratus (Golden hamster).